The sequence spans 233 residues: Pre-mRNA-splicing factor syf-2 (233 aa).

Positions 1–16 (MSDSEQTSSGTASSGS) are enriched in polar residues. Disordered regions lie at residues 1-80 (MSDS…EDKG) and 95-119 (VTEK…YEDM). The span at 17 to 80 (KMKDFNQRFR…QDRKEAEDKG (64 aa)) shows a compositional bias: basic and acidic residues. A coiled-coil region spans residues 18 to 77 (MKDFNQRFRDLHKMRQKARKENHAQVVEEDRRKKLPKNFEAKKERDQWQVKELQDRKEAE).

The protein belongs to the SYF2 family. May be part of a spliceosome complex.

The protein localises to the nucleus. May be involved in pre-mRNA splicing. This is Pre-mRNA-splicing factor syf-2 from Caenorhabditis briggsae.